Reading from the N-terminus, the 295-residue chain is Zinc finger C2H2 protein ECU08_0560 (295 aa).

C2H2-type zinc fingers lie at residues 219-243 (FVCT…NLMH) and 249-273 (HKCR…YKVH).

The polypeptide is Zinc finger C2H2 protein ECU08_0560 (Encephalitozoon cuniculi (strain GB-M1) (Microsporidian parasite)).